A 133-amino-acid polypeptide reads, in one-letter code: Type III secretion protein HrcQb (133 aa).

Over residues 1–21 (MSTEDLYQDDVEMLDDYEEPV) the composition is skewed to acidic residues. The tract at residues 1 to 60 (MSTEDLYQDDVEMLDDYEEPVPEQADQQQRDDEYAEHAFGYADSDAEHEEQSGDHHESPM) is disordered. A compositionally biased stretch (basic and acidic residues) spans 49 to 59 (EEQSGDHHESP).

Belongs to the FliN/MopA/SpaO family. Homotetramer. The four monomers assemble into two tightly bound homodimers. Interacts with HrcQa.

It localises to the cytoplasm. Component of the type III secretion system, which is required for effector protein delivery, parasitism, and pathogenicity. Probably participates in the formation of a C-ring-like assembly along with HrcQa. This chain is Type III secretion protein HrcQb (hrcQb), found in Pseudomonas syringae pv. syringae.